The primary structure comprises 309 residues: Porphobilinogen deaminase (309 aa).

S-(dipyrrolylmethanemethyl)cysteine is present on C241.

It belongs to the HMBS family. In terms of assembly, monomer. Dipyrromethane is required as a cofactor.

The enzyme catalyses 4 porphobilinogen + H2O = hydroxymethylbilane + 4 NH4(+). Its pathway is porphyrin-containing compound metabolism; protoporphyrin-IX biosynthesis; coproporphyrinogen-III from 5-aminolevulinate: step 2/4. Functionally, tetrapolymerization of the monopyrrole PBG into the hydroxymethylbilane pre-uroporphyrinogen in several discrete steps. In Bacillus cereus (strain G9842), this protein is Porphobilinogen deaminase.